The chain runs to 297 residues: Phosphatidylglycerol--prolipoprotein diacylglyceryl transferase (297 aa).

Helical transmembrane passes span 20 to 40 (FLTI…GLFV), 50 to 70 (INPL…IIGA), 105 to 125 (AVWE…LSII), and 133 to 153 (IHLK…QSIG). Arg154 is an a 1,2-diacyl-sn-glycero-3-phospho-(1'-sn-glycerol) binding site. A run of 3 helical transmembrane segments spans residues 193–213 (PTFL…IFVF), 225–245 (GFIS…IEGL), and 266–286 (AQFI…FLRL).

The protein belongs to the Lgt family.

Its subcellular location is the cell inner membrane. It catalyses the reaction L-cysteinyl-[prolipoprotein] + a 1,2-diacyl-sn-glycero-3-phospho-(1'-sn-glycerol) = an S-1,2-diacyl-sn-glyceryl-L-cysteinyl-[prolipoprotein] + sn-glycerol 1-phosphate + H(+). It participates in protein modification; lipoprotein biosynthesis (diacylglyceryl transfer). Its function is as follows. Catalyzes the transfer of the diacylglyceryl group from phosphatidylglycerol to the sulfhydryl group of the N-terminal cysteine of a prolipoprotein, the first step in the formation of mature lipoproteins. The protein is Phosphatidylglycerol--prolipoprotein diacylglyceryl transferase of Prochlorococcus marinus (strain MIT 9312).